We begin with the raw amino-acid sequence, 63 residues long: KIDGYPVDYWNCKRICWYNNKYCNDLCKGLKADSGYCWGWTLSCYCQGLPDNARIKRSGRCRA.

The LCN-type CS-alpha/beta domain occupies 2–62; it reads IDGYPVDYWN…ARIKRSGRCR (61 aa). 4 disulfide bridges follow: cysteine 12–cysteine 61, cysteine 16–cysteine 37, cysteine 23–cysteine 44, and cysteine 27–cysteine 46.

The protein belongs to the long (4 C-C) scorpion toxin superfamily. Sodium channel inhibitor family. Alpha subfamily. In terms of tissue distribution, expressed by the venom gland.

The protein localises to the secreted. Its function is as follows. This neurotoxin acts on sodium and calcium channels. Potently inhibits native voltage-gated T-type calcium channel activity in mouse male germ cells. Also binds Cav3.1/CACNA1G, Cav3.2/CACNA1H, and Cav3.3/CACNA1I T-type calcium channels and inhibits the channels by modifying voltage-dependent gating. In addition, binds and significantly inhibits the inactivation of activated sodium channels (Nav1.2/SCN2A and Nav1.5/SCN5A). The protein is Kurtoxin-like II of Parabuthus granulatus (Granulated thick-tailed scorpion).